The sequence spans 399 residues: Organelle RRM domain-containing protein 1, chloroplastic (399 aa).

The N-terminal 52 residues, Met-1–Ser-52, are a transit peptide targeting the chloroplast. One can recognise an RRM domain in the interval Lys-295–His-373. A disordered region spans residues Asp-377–Gly-399.

Its subcellular location is the plastid. The protein localises to the chloroplast. Its function is as follows. Involved in C-to-U editing of chloroplastic RNA. Functions as major chloroplastic editing factor. Controls a majority of the chloroplastic editing sites. The polypeptide is Organelle RRM domain-containing protein 1, chloroplastic (Oryza sativa subsp. japonica (Rice)).